Here is a 385-residue protein sequence, read N- to C-terminus: Phosphatidate cytidylyltransferase, mitochondrial (385 aa).

It belongs to the TAM41 family. Mg(2+) serves as cofactor. Co(2+) is required as a cofactor. Requires Cu(2+) as cofactor.

It localises to the mitochondrion inner membrane. It carries out the reaction a 1,2-diacyl-sn-glycero-3-phosphate + CTP + H(+) = a CDP-1,2-diacyl-sn-glycerol + diphosphate. Its pathway is phospholipid metabolism; CDP-diacylglycerol biosynthesis; CDP-diacylglycerol from sn-glycerol 3-phosphate: step 3/3. Functionally, catalyzes the formation of CDP-diacylglycerol (CDP-DAG) from phosphatidic acid (PA) in the mitochondrial inner membrane. Required for the biosynthesis of the dimeric phospholipid cardiolipin, which stabilizes supercomplexes of the mitochondrial respiratory chain in the mitochondrial inner membrane. This Saccharomyces cerevisiae (strain ATCC 204508 / S288c) (Baker's yeast) protein is Phosphatidate cytidylyltransferase, mitochondrial (TAM41).